Consider the following 303-residue polypeptide: DnaJ homolog subfamily C member 17 (303 aa).

The J domain maps to 11–76 (DLYALLGIEE…AARAAYDKVR (66 aa)). 2 disordered regions span residues 104 to 123 (ERQAQAHGSEEEEESRSATT) and 150 to 170 (IRQDREQRLRGRTENTEGKGT). Ser-112 carries the post-translational modification Phosphoserine. Residues 150 to 166 (IRQDREQRLRGRTENTE) are compositionally biased toward basic and acidic residues. The RRM domain maps to 178–249 (KCKKEDESQG…NPLKVSWLEG (72 aa)). Lys-264 is subject to N6-methyllysine.

As to expression, expressed in the thyroid gland.

It is found in the cytoplasm. The protein resides in the nucleus. Its function is as follows. May negatively affect PAX8-induced thyroglobulin/TG transcription. This chain is DnaJ homolog subfamily C member 17 (Dnajc17), found in Mus musculus (Mouse).